Consider the following 493-residue polypeptide: Amphoterin-induced protein 1 (493 aa).

The N-terminal stretch at 1–27 (MQPQRDLRGLWLLLLSLFLLLFEVARA) is a signal peptide. The 34-residue stretch at 28 to 61 (GRPVVSCPANCLCASNILSCSKQQLPNVPQSLPG) folds into the LRRNT domain. The Extracellular portion of the chain corresponds to 28–372 (GRPVVSCPAN…LHGHHDTLNT (345 aa)). Intrachain disulfides connect C34–C40 and C38–C47. LRR repeat units follow at residues 62-83 (YTALLDLSHNNLSRLKAEWTPT), 87-108 (NLHSLLLSHNHLNFISSEAFVP), 111-132 (NLRYLDLSSNHLHTLDEFLFSG), 135-156 (ALEVLLLYNNHIVVVDRNAFED), 159-179 (QLQKLYLSQNMISRFPLELIK), and 186-206 (KLTLLDLSSNKLKKLPLTDLQ). A glycan (N-linked (GlcNAc...) asparagine) is linked at N72. The LRRCT domain occupies 221 to 272 (NPLECDCKLYQLFSHWQYRQLSSVMDFQEDLYCVHSKKLHNVFSLDFFNCSE). 3 disulfides stabilise this stretch: C225/C253, C227/C270, and C290/C341. Residues N269, N315, N349, and N360 are each glycosylated (N-linked (GlcNAc...) asparagine). Residues 269–353 (NCSEYKESAW…MGETFNETLS (85 aa)) form the Ig-like C2-type domain. The helical transmembrane segment at 373 to 393 (AYTTLVGCILSVVLVLIYLYL) threads the bilayer. The Cytoplasmic segment spans residues 394–493 (TPCRCWCRGV…SVFSDTPIVV (100 aa)). Positions 405 to 493 (KPSSHQGDSL…SVFSDTPIVV (89 aa)) are disordered. Positions 408–424 (SHQGDSLSSSMLSTTPN) are enriched in polar residues. Positions 431 to 442 (GDKDDGFDRRVA) are enriched in basic and acidic residues. Phosphoserine is present on residues S477 and S481.

Belongs to the immunoglobulin superfamily. AMIGO family. In terms of assembly, homodimer, and heterodimer with AMIGO2 and AMIGO3. Interacts with KCNB1.

The protein resides in the cell membrane. It is found in the perikaryon. The protein localises to the cell projection. Its subcellular location is the dendrite. It localises to the axon. Its function is as follows. Promotes growth and fasciculation of neurites from cultured hippocampal neurons. May be involved in fasciculation as well as myelination of developing neural axons. May have a role in regeneration as well as neural plasticity in the adult nervous system. May mediate homophilic as well as heterophilic cell-cell interaction and contribute to signal transduction through its intracellular domain. Assembled with KCNB1 modulates the gating characteristics of the delayed rectifier voltage-dependent potassium channel KCNB1. This is Amphoterin-induced protein 1 from Rattus norvegicus (Rat).